Reading from the N-terminus, the 278-residue chain is Tryptophan synthase alpha chain (278 aa).

Catalysis depends on proton acceptor residues Glu49 and Asp60.

This sequence belongs to the TrpA family. Tetramer of two alpha and two beta chains.

It carries out the reaction (1S,2R)-1-C-(indol-3-yl)glycerol 3-phosphate + L-serine = D-glyceraldehyde 3-phosphate + L-tryptophan + H2O. Its pathway is amino-acid biosynthesis; L-tryptophan biosynthesis; L-tryptophan from chorismate: step 5/5. Functionally, the alpha subunit is responsible for the aldol cleavage of indoleglycerol phosphate to indole and glyceraldehyde 3-phosphate. The polypeptide is Tryptophan synthase alpha chain (Corynebacterium diphtheriae (strain ATCC 700971 / NCTC 13129 / Biotype gravis)).